Consider the following 509-residue polypeptide: Maturase K (509 aa).

The protein belongs to the intron maturase 2 family. MatK subfamily.

The protein resides in the plastid. The protein localises to the chloroplast. In terms of biological role, usually encoded in the trnK tRNA gene intron. Probably assists in splicing its own and other chloroplast group II introns. The protein is Maturase K of Nicotiana bigelovii (Bigelov's tobacco).